Reading from the N-terminus, the 245-residue chain is Carboxymethylenebutenolidase homolog (245 aa).

At Ala2 the chain carries N-acetylalanine. Active-site residues include Cys132, Asp179, and His212. At Ser223 the chain carries Phosphoserine.

It belongs to the dienelactone hydrolase family.

The protein resides in the cytoplasm. It is found in the cytosol. Cysteine hydrolase. This is Carboxymethylenebutenolidase homolog (Cmbl) from Rattus norvegicus (Rat).